The sequence spans 113 residues: Small ribosomal subunit protein eS24 (113 aa).

The protein belongs to the eukaryotic ribosomal protein eS24 family.

This Metallosphaera sedula (strain ATCC 51363 / DSM 5348 / JCM 9185 / NBRC 15509 / TH2) protein is Small ribosomal subunit protein eS24.